The sequence spans 82 residues: Acyl carrier protein (82 aa).

The 79-residue stretch at 3–81 folds into the Carrier domain; it reads SSEQEILAGL…DAVTYIAGAQ (79 aa). At S41 the chain carries O-(pantetheine 4'-phosphoryl)serine.

The protein belongs to the acyl carrier protein (ACP) family. Post-translationally, 4'-phosphopantetheine is transferred from CoA to a specific serine of apo-ACP by AcpS. This modification is essential for activity because fatty acids are bound in thioester linkage to the sulfhydryl of the prosthetic group.

Its subcellular location is the cytoplasm. It participates in lipid metabolism; fatty acid biosynthesis. Its function is as follows. Carrier of the growing fatty acid chain in fatty acid biosynthesis. The polypeptide is Acyl carrier protein (Beutenbergia cavernae (strain ATCC BAA-8 / DSM 12333 / CCUG 43141 / JCM 11478 / NBRC 16432 / NCIMB 13614 / HKI 0122)).